We begin with the raw amino-acid sequence, 833 residues long: Protein PAT1 homolog 1 (833 aa).

Disordered regions lie at residues 279–313, 398–427, and 492–549; these read DMRE…MHGM, NIRQ…SGMP, and EEAT…DKKL. The segment covering 303-313 has biased composition (low complexity); that stretch reads PSLSPGGMHGM. Residues 398–408 show a composition bias toward polar residues; sequence NIRQNGPQFSH.

The protein belongs to the PAT1 family.

It localises to the cytoplasm. The protein localises to the P-body. Its function is as follows. RNA-binding protein involved in deadenylation-dependent decapping of mRNAs, leading to the degradation of mRNAs. Acts as a scaffold protein that connects deadenylation and decapping machinery. Required for the recruitment of P-body components such as cgh-1 in somatic blastomeres. May play a role in recruiting the decapping enzyme dcap-1 to cytoplasmic puncta in the cell body of the posterior touch receptor neuron, PLM. This chain is Protein PAT1 homolog 1, found in Caenorhabditis elegans.